Here is a 532-residue protein sequence, read N- to C-terminus: Cilia- and flagella-associated protein 97 (532 aa).

S19 is modified (phosphoserine). Disordered stretches follow at residues 28 to 83, 116 to 263, 306 to 333, 398 to 421, and 485 to 532; these read ETNS…PVEN, IPNR…TPDI, KAAK…SLDH, LSRQ…PPKL, and GQYS…TAWL. Residues 35 to 49 are compositionally biased toward basic and acidic residues; the sequence is KQNDDPKERIDKDTK. The segment covering 50–63 has biased composition (polar residues); sequence NVNSNTGMQTTENY. The segment covering 67-82 has biased composition (basic and acidic residues); sequence KGNERNVKFPPEHPVE. The segment covering 127–139 has biased composition (acidic residues); the sequence is GEDDYYTDGEESS. T133 bears the Phosphothreonine mark. Residues S138 and S139 each carry the phosphoserine modification. Low complexity-rich tracts occupy residues 170-185 and 194-205; these read SSSS…SGSG and DSHLSDSSPSSK. S218 carries the post-translational modification Phosphoserine. The span at 227–239 shows a compositional bias: polar residues; it reads IKSTETQPSSTTP. A Phosphoserine modification is found at S248. Residues 253–263 are compositionally biased toward polar residues; that stretch reads TDVSPLSTPDI. A compositionally biased stretch (low complexity) spans 320 to 329; sequence SSKSSSVLDS. Position 330 is a phosphoserine (S330). A coiled-coil region spans residues 374–450; the sequence is GKNYSFTREE…ALLKRLEAVK (77 aa). Over residues 493 to 503 the composition is skewed to polar residues; sequence SRTSSATSGLS.

The protein belongs to the CFAP97 family.

This chain is Cilia- and flagella-associated protein 97, found in Homo sapiens (Human).